The primary structure comprises 310 residues: Beta-1,3-galactosyltransferase 5 (310 aa).

The Cytoplasmic portion of the chain corresponds to 1–7; sequence MAFPKMR. A helical; Signal-anchor for type II membrane protein membrane pass occupies residues 8 to 28; that stretch reads LMYICLLVLGALCLYFSMYSL. Residues 29–310 lie on the Lumenal side of the membrane; that stretch reads NPFKEQSFVY…NSRGEDCPPV (282 aa). 3 N-linked (GlcNAc...) asparagine glycosylation sites follow: N130, N174, and N231.

Belongs to the glycosyltransferase 31 family. As to expression, expressed in stomach, jejunum, colon, pancreas, small intestine, testis and gastrointestinal and pancreatic cancer cell lines. Hardly detected in lung, liver, adrenal gland and peripheral blood leukocytes.

The protein resides in the golgi apparatus membrane. The catalysed reaction is a globoside Gb4Cer (d18:1(4E)) + UDP-alpha-D-galactose = a globoside GalGb4Cer (d18:1(4E)) + UDP + H(+). Its pathway is protein modification; protein glycosylation. Catalyzes the transfer of Gal to GlcNAc-based acceptors with a preference for the core3 O-linked glycan GlcNAc(beta1,3)GalNAc structure. Can use glycolipid LC3Cer as an efficient acceptor. The polypeptide is Beta-1,3-galactosyltransferase 5 (Homo sapiens (Human)).